A 111-amino-acid polypeptide reads, in one-letter code: Cell division protein FtsB (111 aa).

At 1–3 (MRL) the chain is on the cytoplasmic side. The chain crosses the membrane as a helical span at residues 4-21 (LFLVLLVLLGLIQYPLWL). The Periplasmic segment spans residues 22 to 111 (GKGGWFKVWD…PGQTASAPRR (90 aa)). A coiled-coil region spans residues 31 to 62 (DLQRQVAAQHETNDGLRARNAALEAEVRDLAT). Residues 88–111 (VPPGTPVPQPAPGAPGQTASAPRR) form a disordered region. Residues 90–100 (PGTPVPQPAPG) are compositionally biased toward pro residues. The segment covering 101 to 111 (APGQTASAPRR) has biased composition (low complexity).

This sequence belongs to the FtsB family. As to quaternary structure, part of a complex composed of FtsB, FtsL and FtsQ.

Its subcellular location is the cell inner membrane. Essential cell division protein. May link together the upstream cell division proteins, which are predominantly cytoplasmic, with the downstream cell division proteins, which are predominantly periplasmic. The sequence is that of Cell division protein FtsB from Bordetella petrii (strain ATCC BAA-461 / DSM 12804 / CCUG 43448).